A 297-amino-acid polypeptide reads, in one-letter code: Urease accessory protein UreD (297 aa).

The interval 1–41 (MPQAADIATAPQRPSAPGDVVAAGQPPRARGRAHVSSKRRD) is disordered.

It belongs to the UreD family. UreD, UreF and UreG form a complex that acts as a GTP-hydrolysis-dependent molecular chaperone, activating the urease apoprotein by helping to assemble the nickel containing metallocenter of UreC. The UreE protein probably delivers the nickel.

It is found in the cytoplasm. Functionally, required for maturation of urease via the functional incorporation of the urease nickel metallocenter. This Ruegeria sp. (strain TM1040) (Silicibacter sp.) protein is Urease accessory protein UreD.